A 282-amino-acid chain; its full sequence is Formamidopyrimidine-DNA glycosylase (282 aa).

The Schiff-base intermediate with DNA role is filled by Pro2. Glu3 acts as the Proton donor in catalysis. Lys60 serves as the catalytic Proton donor; for beta-elimination activity. Positions 99, 118, and 163 each coordinate DNA. An FPG-type zinc finger spans residues 248-282; that stretch reads LVYRRSGKNCKKCGEKILREKICGRSTHWCPNCQK. The active-site Proton donor; for delta-elimination activity is the Arg272.

This sequence belongs to the FPG family. As to quaternary structure, monomer. Requires Zn(2+) as cofactor.

It catalyses the reaction Hydrolysis of DNA containing ring-opened 7-methylguanine residues, releasing 2,6-diamino-4-hydroxy-5-(N-methyl)formamidopyrimidine.. The catalysed reaction is 2'-deoxyribonucleotide-(2'-deoxyribose 5'-phosphate)-2'-deoxyribonucleotide-DNA = a 3'-end 2'-deoxyribonucleotide-(2,3-dehydro-2,3-deoxyribose 5'-phosphate)-DNA + a 5'-end 5'-phospho-2'-deoxyribonucleoside-DNA + H(+). Functionally, involved in base excision repair of DNA damaged by oxidation or by mutagenic agents. Acts as a DNA glycosylase that recognizes and removes damaged bases. Has a preference for oxidized purines, such as 7,8-dihydro-8-oxoguanine (8-oxoG). Has AP (apurinic/apyrimidinic) lyase activity and introduces nicks in the DNA strand. Cleaves the DNA backbone by beta-delta elimination to generate a single-strand break at the site of the removed base with both 3'- and 5'-phosphates. This is Formamidopyrimidine-DNA glycosylase from Prochlorococcus marinus (strain NATL1A).